The following is an 803-amino-acid chain: Ribonuclease II, chloroplastic/mitochondrial (803 aa).

The transit peptide at 1 to 35 (MMSVRAINGCSIIRTATSAGGPPVSLFRHRIQRLR) directs the protein to the chloroplast and mitochondrion. In terms of domain architecture, RNB spans 399-694 (RIDLTHLKVY…AHYQIKAFLR (296 aa)).

The protein belongs to the RNR ribonuclease family. As to expression, expressed in seedlings, roots, leaves and flowers.

The protein localises to the mitochondrion. The protein resides in the plastid. It is found in the chloroplast. The enzyme catalyses Exonucleolytic cleavage in the 3'- to 5'-direction to yield nucleoside 5'-phosphates.. 3'-5' exoribonuclease that catalyzes 3' maturation of chloroplast and mitochondrion ribosomal RNAs; degrades short nucleotidic extensions to generate the mature 3'-ends. Involved in the maturation of 23S, 16S and 5S rRNAs. This chain is Ribonuclease II, chloroplastic/mitochondrial (RNR1), found in Arabidopsis thaliana (Mouse-ear cress).